Reading from the N-terminus, the 148-residue chain is UPAR/Ly6 domain-containing protein bero (148 aa).

The N-terminal stretch at 1–23 is a signal peptide; the sequence is MVSALKCSLAVAVMISLACSAYA. Cystine bridges form between C26-C72, C29-C37, C51-C90, C102-C116, and C119-C124. A glycan (N-linked (GlcNAc...) asparagine) is linked at N68. N-linked (GlcNAc...) asparagine glycosylation occurs at N125. A lipid anchor (GPI-anchor amidated asparagine) is attached at N125. Positions 126–148 are cleaved as a propeptide — removed in mature form; that stretch reads GSSSLAPIAGAILLFFGVARLLA. Residues 128–148 traverse the membrane as a helical segment; the sequence is SSLAPIAGAILLFFGVARLLA.

The protein belongs to the quiver family.

It is found in the cell membrane. It localises to the membrane. The protein localises to the perikaryon. Its subcellular location is the cell projection. The protein resides in the neuron projection. Its function is as follows. Necessary for the maintenance of persistent fluctuating activities and suppression of acute evoked activities in abdominal leucokinin-producing (ABLK) neurons to negatively regulate neuron excitability involved in nociceptive (perception of pain) behavioral responses. This chain is UPAR/Ly6 domain-containing protein bero, found in Drosophila melanogaster (Fruit fly).